We begin with the raw amino-acid sequence, 235 residues long: tRNA (guanine-N(1)-)-methyltransferase (235 aa).

S-adenosyl-L-methionine-binding positions include Gly-112 and 131-136; that span reads LGDFVL.

This sequence belongs to the RNA methyltransferase TrmD family. As to quaternary structure, homodimer.

The protein localises to the cytoplasm. It carries out the reaction guanosine(37) in tRNA + S-adenosyl-L-methionine = N(1)-methylguanosine(37) in tRNA + S-adenosyl-L-homocysteine + H(+). Its function is as follows. Specifically methylates guanosine-37 in various tRNAs. In Synechococcus elongatus (strain ATCC 33912 / PCC 7942 / FACHB-805) (Anacystis nidulans R2), this protein is tRNA (guanine-N(1)-)-methyltransferase.